Here is a 526-residue protein sequence, read N- to C-terminus: Bifunctional purine biosynthesis protein PurH (526 aa).

Residues methionine 1–valine 148 form the MGS-like domain.

The protein belongs to the PurH family.

The catalysed reaction is (6R)-10-formyltetrahydrofolate + 5-amino-1-(5-phospho-beta-D-ribosyl)imidazole-4-carboxamide = 5-formamido-1-(5-phospho-D-ribosyl)imidazole-4-carboxamide + (6S)-5,6,7,8-tetrahydrofolate. It catalyses the reaction IMP + H2O = 5-formamido-1-(5-phospho-D-ribosyl)imidazole-4-carboxamide. The protein operates within purine metabolism; IMP biosynthesis via de novo pathway; 5-formamido-1-(5-phospho-D-ribosyl)imidazole-4-carboxamide from 5-amino-1-(5-phospho-D-ribosyl)imidazole-4-carboxamide (10-formyl THF route): step 1/1. It functions in the pathway purine metabolism; IMP biosynthesis via de novo pathway; IMP from 5-formamido-1-(5-phospho-D-ribosyl)imidazole-4-carboxamide: step 1/1. This chain is Bifunctional purine biosynthesis protein PurH, found in Baumannia cicadellinicola subsp. Homalodisca coagulata.